Consider the following 272-residue polypeptide: Phosphatidylglycerol--prolipoprotein diacylglyceryl transferase (272 aa).

The next 4 membrane-spanning stretches (helical) occupy residues 15–35, 53–73, 90–110, and 117–137; these read LGPL…LVLF, AFAV…WHVV, IWEG…CFFV, and VPPF…LCFA. Position 138 (arginine 138) interacts with a 1,2-diacyl-sn-glycero-3-phospho-(1'-sn-glycerol). A run of 3 helical transmembrane segments spans residues 174 to 194, 199 to 219, and 237 to 257; these read FHPI…ILLV, VFVK…VLYG, and FGLD…VLIA.

The protein belongs to the Lgt family.

The protein localises to the cell membrane. It carries out the reaction L-cysteinyl-[prolipoprotein] + a 1,2-diacyl-sn-glycero-3-phospho-(1'-sn-glycerol) = an S-1,2-diacyl-sn-glyceryl-L-cysteinyl-[prolipoprotein] + sn-glycerol 1-phosphate + H(+). The protein operates within protein modification; lipoprotein biosynthesis (diacylglyceryl transfer). Functionally, catalyzes the transfer of the diacylglyceryl group from phosphatidylglycerol to the sulfhydryl group of the N-terminal cysteine of a prolipoprotein, the first step in the formation of mature lipoproteins. The polypeptide is Phosphatidylglycerol--prolipoprotein diacylglyceryl transferase (Tropheryma whipplei (strain Twist) (Whipple's bacillus)).